A 413-amino-acid polypeptide reads, in one-letter code: Serine hydroxymethyltransferase (413 aa).

(6S)-5,6,7,8-tetrahydrofolate is bound by residues Leu-117 and 121 to 123; that span reads GHL. The residue at position 226 (Lys-226) is an N6-(pyridoxal phosphate)lysine. 349-351 is a (6S)-5,6,7,8-tetrahydrofolate binding site; the sequence is SPF.

The protein belongs to the SHMT family. As to quaternary structure, homodimer. Pyridoxal 5'-phosphate is required as a cofactor.

It is found in the cytoplasm. It carries out the reaction (6R)-5,10-methylene-5,6,7,8-tetrahydrofolate + glycine + H2O = (6S)-5,6,7,8-tetrahydrofolate + L-serine. The protein operates within one-carbon metabolism; tetrahydrofolate interconversion. It participates in amino-acid biosynthesis; glycine biosynthesis; glycine from L-serine: step 1/1. Catalyzes the reversible interconversion of serine and glycine with tetrahydrofolate (THF) serving as the one-carbon carrier. This reaction serves as the major source of one-carbon groups required for the biosynthesis of purines, thymidylate, methionine, and other important biomolecules. Also exhibits THF-independent aldolase activity toward beta-hydroxyamino acids, producing glycine and aldehydes, via a retro-aldol mechanism. The protein is Serine hydroxymethyltransferase of Listeria welshimeri serovar 6b (strain ATCC 35897 / DSM 20650 / CCUG 15529 / CIP 8149 / NCTC 11857 / SLCC 5334 / V8).